The following is a 34-amino-acid chain: Photosystem II reaction center protein M (34 aa).

Residues 5 to 25 traverse the membrane as a helical segment; that stretch reads ILAVIATALFVLIPTAFLLIL.

Belongs to the PsbM family. In terms of assembly, PSII is composed of 1 copy each of membrane proteins PsbA, PsbB, PsbC, PsbD, PsbE, PsbF, PsbH, PsbI, PsbJ, PsbK, PsbL, PsbM, PsbT, PsbX, PsbY, PsbZ, Psb30/Ycf12, at least 3 peripheral proteins of the oxygen-evolving complex and a large number of cofactors. It forms dimeric complexes.

Its subcellular location is the plastid. The protein localises to the chloroplast thylakoid membrane. In terms of biological role, one of the components of the core complex of photosystem II (PSII). PSII is a light-driven water:plastoquinone oxidoreductase that uses light energy to abstract electrons from H(2)O, generating O(2) and a proton gradient subsequently used for ATP formation. It consists of a core antenna complex that captures photons, and an electron transfer chain that converts photonic excitation into a charge separation. This subunit is found at the monomer-monomer interface. This chain is Photosystem II reaction center protein M, found in Chaetosphaeridium globosum (Charophycean green alga).